The primary structure comprises 1169 residues: Translation initiation factor IF-2 (1169 aa).

Disordered stretches follow at residues 69–108 (IKAK…PLLI) and 139–568 (ALSK…LRAA). Composition is skewed to basic and acidic residues over residues 71–83 (AKNE…DNKN) and 92–102 (HPEKLSKEGLN). Over residues 139–156 (ALSKNQNKTNTSVITTPN) the composition is skewed to polar residues. The segment covering 157 to 171 (LKDKKNPSALQDKKP) has biased composition (basic and acidic residues). Low complexity predominate over residues 196–214 (NLANSNRNINANKINNSVN). The span at 231-248 (ADNNNFPKKNLNSPNVKS) shows a compositional bias: polar residues. The span at 265–281 (NTNRPNSNSRQPSSNTQ) shows a compositional bias: low complexity. Polar residues-rich tracts occupy residues 282-294 (ISAN…NRQG), 412-432 (MQLQ…NVNK), and 439-455 (NQKT…SPSP). The segment covering 472 to 486 (GRTDWDDSAKLEALR) has biased composition (basic and acidic residues). Residues 544–560 (KQFKKKKKETTRQRQKR) are compositionally biased toward basic residues. Residues 661-838 (KRPPVITVMG…EVEDLQANPE (178 aa)) enclose the tr-type G domain. Residues 670-677 (GHVDHGKT) form a G1 region. GTP is bound at residue 670 to 677 (GHVDHGKT). Positions 695-699 (GITQH) are G2. The interval 720-723 (DTPG) is G3. GTP is bound by residues 720-724 (DTPGH) and 774-777 (NKID). A G4 region spans residues 774-777 (NKID). The tract at residues 810–812 (SAI) is G5.

It belongs to the TRAFAC class translation factor GTPase superfamily. Classic translation factor GTPase family. IF-2 subfamily.

It localises to the cytoplasm. Its function is as follows. One of the essential components for the initiation of protein synthesis. Protects formylmethionyl-tRNA from spontaneous hydrolysis and promotes its binding to the 30S ribosomal subunits. Also involved in the hydrolysis of GTP during the formation of the 70S ribosomal complex. The polypeptide is Translation initiation factor IF-2 (Prochlorococcus marinus subsp. pastoris (strain CCMP1986 / NIES-2087 / MED4)).